Here is a 412-residue protein sequence, read N- to C-terminus: DnaJ homolog subfamily A member 2 (412 aa).

The region spanning 8–70 is the J domain; it reads KLYDILGVPP…EKRELYDRYG (63 aa). An N6-acetyllysine modification is found at Lys39. Phosphoserine is present on residues Ser78 and Ser123. The segment at 130 to 214 adopts a CR-type zinc-finger fold; it reads GKTTKLQLSK…CEGKKVIKEV (85 aa). Lys134 participates in a covalent cross-link: Glycyl lysine isopeptide (Lys-Gly) (interchain with G-Cter in SUMO2). 2 residues coordinate Zn(2+): Cys143 and Cys146. The CXXCXGXG motif repeat unit spans residues 143–150; sequence CSACSGQG. The residue at position 152 (Lys152) is an N6-acetyllysine. Zn(2+)-binding residues include Cys159, Cys162, Cys186, Cys189, Cys202, and Cys205. CXXCXGXG motif repeat units follow at residues 159–166, 186–193, and 202–209; these read CSACRGRG, CSDCNGEG, and CKKCEGKK. Positions 365 to 412 are disordered; the sequence is IGETEEVELQEFDSTRGSGGGQRREAYNDSSDEESSSHHGPGVQCAHQ. Phosphotyrosine is present on Tyr391. Phosphoserine occurs at positions 394 and 395. Cys409 is modified (cysteine methyl ester). Cys409 carries the S-farnesyl cysteine lipid modification. A propeptide spans 410–412 (removed in mature form); the sequence is AHQ.

The protein resides in the membrane. Functionally, co-chaperone of Hsc70. Stimulates ATP hydrolysis and the folding of unfolded proteins mediated by HSPA1A/B (in vitro). The polypeptide is DnaJ homolog subfamily A member 2 (DNAJA2) (Homo sapiens (Human)).